The chain runs to 237 residues: MPINPLYLFPNLFTASSIFLGMMSIFYASSYQFVMACWLVVASLILDGLDGRVARLTNTTSKFGIEFDSLADVVAFGVAPSLITYFYVGYNFGRIGMAVSALFVIFGAIRLARFNISTNTSDPYSFIGIPIPAAAVLVVLCVLLDNKYHFLEGNTEKLFLGFIVLLGVLMVSNIRYPNFKKVKWNLKLFILVLIFLSLVFVRPLEALSVFMGLYLIYGIIRWIFLMVKIIFNKNKSA.

8 consecutive transmembrane segments (helical) span residues 3 to 23 (INPL…LGMM), 25 to 45 (IFYA…ASLI), 73 to 93 (VVAF…YNFG), 95 to 115 (IGMA…ARFN), 124 to 144 (YSFI…CVLL), 150 to 170 (FLEG…GVLM), 184 to 204 (WNLK…VRPL), and 207 to 227 (LSVF…FLMV).

It belongs to the CDP-alcohol phosphatidyltransferase class-I family.

It is found in the cell membrane. The catalysed reaction is a CDP-1,2-diacyl-sn-glycerol + L-serine = a 1,2-diacyl-sn-glycero-3-phospho-L-serine + CMP + H(+). The protein is CDP-diacylglycerol--serine O-phosphatidyltransferase (pssA) of Helicobacter pylori (strain J99 / ATCC 700824) (Campylobacter pylori J99).